A 215-amino-acid chain; its full sequence is Late embryogenesis abundant protein 14 (215 aa).

Disordered stretches follow at residues Met-1–Gly-129 and Ser-190–Gln-215. Basic and acidic residues-rich tracts occupy residues Gly-13 to Gly-24, Glu-32 to Ala-41, Gly-54 to Ala-81, and Ala-88 to Ala-111. A compositionally biased stretch (polar residues) spans Asp-192 to Gln-215.

The protein belongs to the LEA type 4 family. As to expression, expressed in the shoot apex and leaves. Expressed in dry seeds. Expressed in roots and leaves.

The protein resides in the nucleus. The polypeptide is Late embryogenesis abundant protein 14 (Oryza sativa subsp. japonica (Rice)).